A 341-amino-acid polypeptide reads, in one-letter code: Glycerol-3-phosphate dehydrogenase [NAD(P)+] (341 aa).

Residues serine 11, tryptophan 12, arginine 32, and lysine 106 each coordinate NADPH. Residues lysine 106, glycine 137, and threonine 139 each coordinate sn-glycerol 3-phosphate. Alanine 141 is an NADPH binding site. Sn-glycerol 3-phosphate is bound by residues lysine 192, aspartate 245, serine 255, arginine 256, and asparagine 257. The Proton acceptor role is filled by lysine 192. An NADPH-binding site is contributed by arginine 256. NADPH contacts are provided by valine 280 and glutamate 282.

It belongs to the NAD-dependent glycerol-3-phosphate dehydrogenase family.

The protein resides in the cytoplasm. It catalyses the reaction sn-glycerol 3-phosphate + NAD(+) = dihydroxyacetone phosphate + NADH + H(+). The enzyme catalyses sn-glycerol 3-phosphate + NADP(+) = dihydroxyacetone phosphate + NADPH + H(+). The protein operates within membrane lipid metabolism; glycerophospholipid metabolism. Catalyzes the reduction of the glycolytic intermediate dihydroxyacetone phosphate (DHAP) to sn-glycerol 3-phosphate (G3P), the key precursor for phospholipid synthesis. This Exiguobacterium sp. (strain ATCC BAA-1283 / AT1b) protein is Glycerol-3-phosphate dehydrogenase [NAD(P)+].